The chain runs to 293 residues: Putative metal ABC transporter substrate-binding protein Hpf (293 aa).

The first 22 residues, 1–22 (MRNSFKIMTALALGLFAMQANA), serve as a signal peptide directing secretion. An interaction with host components region spans residues 23 to 48 (KFKVVTTFTVIQDIAQNVAGNAATVE). Positions 58, 123, 189, and 264 each coordinate a divalent metal cation.

This sequence belongs to the bacterial solute-binding protein 9 family. As to quaternary structure, interacts with host laminin and vitronectin. Can interact with both immobilized and soluble vitronectin.

The protein localises to the cell outer membrane. It localises to the cell surface. Its subcellular location is the periplasm. Its function is as follows. Part of an ATP-binding cassette (ABC) transport system involved in metal import. Binds a metal with high affinity and specificity and delivers it to the membrane permease for translocation into the cytoplasm. Acts as an adhesin that promotes binding of H.influenzae to host laminin and vitronectin. In addition, interaction with serum vitronectin plays an important role in bacterial serum resistance. The sequence is that of Putative metal ABC transporter substrate-binding protein Hpf (hpf) from Haemophilus influenzae (strain NTHi 3655).